The primary structure comprises 132 residues: Putative nickel-responsive regulator (132 aa).

4 residues coordinate Ni(2+): His-77, His-88, His-90, and Cys-96.

Belongs to the transcriptional regulatory CopG/NikR family. It depends on Ni(2+) as a cofactor.

Its function is as follows. Transcriptional regulator. In Brucella abortus (strain S19), this protein is Putative nickel-responsive regulator.